A 264-amino-acid polypeptide reads, in one-letter code: Thiazole synthase (264 aa).

The Schiff-base intermediate with DXP role is filled by lysine 100. Residues glycine 161, 187–188, and 209–210 each bind 1-deoxy-D-xylulose 5-phosphate; these read AG and NT.

It belongs to the ThiG family. As to quaternary structure, homotetramer. Forms heterodimers with either ThiH or ThiS.

It is found in the cytoplasm. It carries out the reaction [ThiS sulfur-carrier protein]-C-terminal-Gly-aminoethanethioate + 2-iminoacetate + 1-deoxy-D-xylulose 5-phosphate = [ThiS sulfur-carrier protein]-C-terminal Gly-Gly + 2-[(2R,5Z)-2-carboxy-4-methylthiazol-5(2H)-ylidene]ethyl phosphate + 2 H2O + H(+). The protein operates within cofactor biosynthesis; thiamine diphosphate biosynthesis. Catalyzes the rearrangement of 1-deoxy-D-xylulose 5-phosphate (DXP) to produce the thiazole phosphate moiety of thiamine. Sulfur is provided by the thiocarboxylate moiety of the carrier protein ThiS. In vitro, sulfur can be provided by H(2)S. This is Thiazole synthase from Nitrosospira multiformis (strain ATCC 25196 / NCIMB 11849 / C 71).